The following is a 98-amino-acid chain: Nucleoid-associated protein pc0477 (98 aa).

Belongs to the YbaB/EbfC family. In terms of assembly, homodimer.

It localises to the cytoplasm. Its subcellular location is the nucleoid. In terms of biological role, binds to DNA and alters its conformation. May be involved in regulation of gene expression, nucleoid organization and DNA protection. This Protochlamydia amoebophila (strain UWE25) protein is Nucleoid-associated protein pc0477.